Consider the following 266-residue polypeptide: ATP synthase subunit a (266 aa).

A run of 5 helical transmembrane segments spans residues 33 to 53 (FWTL…LFLA), 95 to 115 (VIAP…LMDL), 141 to 161 (DVNI…FYSI), 206 to 226 (LFGN…LLPW), and 237 to 257 (AIFH…LTIV).

Belongs to the ATPase A chain family. As to quaternary structure, F-type ATPases have 2 components, CF(1) - the catalytic core - and CF(0) - the membrane proton channel. CF(1) has five subunits: alpha(3), beta(3), gamma(1), delta(1), epsilon(1). CF(0) has three main subunits: a(1), b(2) and c(9-12). The alpha and beta chains form an alternating ring which encloses part of the gamma chain. CF(1) is attached to CF(0) by a central stalk formed by the gamma and epsilon chains, while a peripheral stalk is formed by the delta and b chains.

The protein localises to the cell inner membrane. Key component of the proton channel; it plays a direct role in the translocation of protons across the membrane. The chain is ATP synthase subunit a from Klebsiella pneumoniae subsp. pneumoniae (strain ATCC 700721 / MGH 78578).